The primary structure comprises 431 residues: MATEHEEKLGTEDSKWLGEYSQVHMNVFGTPLRVMDHGQGAHIWDVDGNEYLDFLAGIAVNSLGYAHPKWVKAVADQAAKVAHISNYFASEPQIELASKLVKLAGAPEGSKVYFGNSGAEGNEAALKLAKLYGRTLPGALPSIGGKPARILAMTHGFHGRTMGALSATWKPGIRKPYDPLVPNIEFVRAGDKVALHDAFAQTGLGRYGKGPVAAVILELIQGEAGVQPLGADYVKFVRELCDINHALLIIDEVQTGIGRTGKWFAFQRDDLSGGVTPDMVTFAKGVAGGFPMGGMIAFGEKLAALFTPGSHGSTFAGNPLGAAAGLATLDVIEDENLVANAEARGEQLRDGIMATGNPLFVSVRGRGLLDAVELKHPCSHAVMNYCLEHGLIVNAVAPNALRFAPPLIVTAQDVDQALAILKDVPTDLPDD.

Pyridoxal 5'-phosphate-binding positions include 118–119 and F157; that span reads GA. R160 is a N(2)-acetyl-L-ornithine binding site. 251–254 provides a ligand contact to pyridoxal 5'-phosphate; the sequence is DEVQ. K284 carries the post-translational modification N6-(pyridoxal phosphate)lysine. Residue S313 coordinates N(2)-acetyl-L-ornithine. Pyridoxal 5'-phosphate is bound at residue T314.

It belongs to the class-III pyridoxal-phosphate-dependent aminotransferase family. ArgD subfamily. In terms of assembly, homodimer. Requires pyridoxal 5'-phosphate as cofactor.

The protein resides in the cytoplasm. It catalyses the reaction N(2)-acetyl-L-ornithine + 2-oxoglutarate = N-acetyl-L-glutamate 5-semialdehyde + L-glutamate. The protein operates within amino-acid biosynthesis; L-arginine biosynthesis; N(2)-acetyl-L-ornithine from L-glutamate: step 4/4. In Bifidobacterium longum (strain NCC 2705), this protein is Acetylornithine aminotransferase.